Here is a 603-residue protein sequence, read N- to C-terminus: Grainyhead-like protein 3 homolog (603 aa).

A transcription activation region spans residues 30 to 95; that stretch reads EAWKTYLENP…QGKKFYHSMD (66 aa). The Grh/CP2 DB domain maps to 226–461; that stretch reads GLKSDFEYTL…DLETQPVLFI (236 aa).

Belongs to the grh/CP2 family. Grainyhead subfamily. As to quaternary structure, homodimer, also forms heterodimers with GRHL1 and GRHL2. Interacts with LMO4.

The protein localises to the nucleus. Functionally, transcription factor playing important roles in primary neurulation and in the differentiation of stratified epithelia of both ectodermal and endodermal origin. Binds directly to the consensus DNA sequence 5'-AACCGGTT-3' acting as an activator and repressor on distinct target genes. Essential for epidermal differentiation and barrier formation at the end of embryogenesis with TGM3 as critical direct target. Exhibits functional redundancy with GRHL2 in epidermal morphogenetic events such as eyelid fusion and epidermal wound repair. Despite being dispensable during normal epidermal homeostasis in the adulthood, is again required for barrier repair after immune-mediated epidermal damage, regulates distinct gene batteries in embryonic epidermal differentiation and adult epidermal barrier reformation after injury. Plays unique and cooperative roles with GRHL2 in establishing distinct zones of primary neurulation. Essential for spinal closure, functions cooperatively with GRHL2 in closure 2 (forebrain/midbrain boundary) and posterior neuropore closure. Also required for proper development of the oral periderm. No genetic interaction with GRHL1, no functional cooperativity due to diverse target gene selectivity. In Mus musculus (Mouse), this protein is Grainyhead-like protein 3 homolog.